The following is a 560-amino-acid chain: Thermosome subunit alpha (560 aa).

Positions 535 to 547 (SEKKGGEGSKEES) are enriched in basic and acidic residues. The interval 535 to 560 (SEKKGGEGSKEESGGEGGAGTPSLGD) is disordered.

It belongs to the TCP-1 chaperonin family. In terms of assembly, forms a heterooligomeric complex of two stacked nine-membered rings; one of alpha and the other of beta subunits. Sometimes called a 'rosettasome'.

It localises to the cytoplasm. The enzyme catalyses ATP + H2O = ADP + phosphate + H(+). Its function is as follows. Molecular chaperone; binds unfolded polypeptides in vitro, stimulates protein folding and has ATPase activity. One of the most abundant proteins in the cell at all temperatures. In Saccharolobus shibatae (strain ATCC 51178 / DSM 5389 / JCM 8931 / NBRC 15437 / B12) (Sulfolobus shibatae), this protein is Thermosome subunit alpha (thsA).